Here is a 153-residue protein sequence, read N- to C-terminus: Endoribonuclease YbeY (153 aa).

Positions 119, 123, and 129 each coordinate Zn(2+).

Belongs to the endoribonuclease YbeY family. It depends on Zn(2+) as a cofactor.

The protein localises to the cytoplasm. Functionally, single strand-specific metallo-endoribonuclease involved in late-stage 70S ribosome quality control and in maturation of the 3' terminus of the 16S rRNA. The protein is Endoribonuclease YbeY of Desulforamulus reducens (strain ATCC BAA-1160 / DSM 100696 / MI-1) (Desulfotomaculum reducens).